The following is a 423-amino-acid chain: Imidazolonepropionase (423 aa).

2 residues coordinate Fe(3+): H78 and H80. Positions 78 and 80 each coordinate Zn(2+). The 4-imidazolone-5-propanoate site is built by R87, Y150, and H183. Residue Y150 coordinates N-formimidoyl-L-glutamate. H247 lines the Fe(3+) pocket. A Zn(2+)-binding site is contributed by H247. E250 serves as a coordination point for 4-imidazolone-5-propanoate. Position 322 (D322) interacts with Fe(3+). D322 is a binding site for Zn(2+). Positions 324 and 326 each coordinate N-formimidoyl-L-glutamate. S327 is a 4-imidazolone-5-propanoate binding site.

The protein belongs to the metallo-dependent hydrolases superfamily. HutI family. Zn(2+) is required as a cofactor. It depends on Fe(3+) as a cofactor.

The protein localises to the cytoplasm. The catalysed reaction is 4-imidazolone-5-propanoate + H2O = N-formimidoyl-L-glutamate. It participates in amino-acid degradation; L-histidine degradation into L-glutamate; N-formimidoyl-L-glutamate from L-histidine: step 3/3. Functionally, catalyzes the hydrolytic cleavage of the carbon-nitrogen bond in imidazolone-5-propanoate to yield N-formimidoyl-L-glutamate. It is the third step in the universal histidine degradation pathway. The protein is Imidazolonepropionase of Bacillus cereus (strain ZK / E33L).